A 446-amino-acid polypeptide reads, in one-letter code: MHIVVVSVNHKTADVSLREKLTFSESSIQQALSALINQKSILEGVILSTCNRTEIYAVTDQVHTGRYYVKSFMSEWFDVDIETIKSATDVKVGNEAIHHLFKVITGLDSIVLGETQILGQIRDSFLLAQSEGTTGTVFNKLFKDAITLAKRAHAETDISSKAVSVSYAAVELSKKILGKLENKKILIVGAGEMAELALQNLVGSGATDITVINRTAEKAKSLADQYGGRQVSLQELQCALIESDIVISSTSSQEFIITKPMMQDIMKLRKNKSLVLIDIAVPRDIDPEVNDIDLIFNYDVDDLKGLVDANLAERERAAQVIYTMIDKQVISFVDWINMLGVVPVITALREKALRIQATTMDSIDRKMPNLSERDRKVISKHMKSIINQILKDPISQAKEVSGSENRAEELQFFQEIFNITNEVESIKNNEPEVRRSKNSFVFNPEQ.

Residues 49 to 52 (TCNR), serine 109, 114 to 116 (ETQ), and glutamine 120 each bind substrate. Catalysis depends on cysteine 50, which acts as the Nucleophile. Residue 189–194 (GAGEMA) participates in NADP(+) binding.

This sequence belongs to the glutamyl-tRNA reductase family. As to quaternary structure, homodimer.

It catalyses the reaction (S)-4-amino-5-oxopentanoate + tRNA(Glu) + NADP(+) = L-glutamyl-tRNA(Glu) + NADPH + H(+). Its pathway is porphyrin-containing compound metabolism; protoporphyrin-IX biosynthesis; 5-aminolevulinate from L-glutamyl-tRNA(Glu): step 1/2. In terms of biological role, catalyzes the NADPH-dependent reduction of glutamyl-tRNA(Glu) to glutamate 1-semialdehyde (GSA). This Macrococcus caseolyticus (strain JCSC5402) (Macrococcoides caseolyticum) protein is Glutamyl-tRNA reductase.